We begin with the raw amino-acid sequence, 290 residues long: Ribosomal protein L11 methyltransferase (290 aa).

Positions 136, 157, 179, and 222 each coordinate S-adenosyl-L-methionine.

It belongs to the methyltransferase superfamily. PrmA family.

It is found in the cytoplasm. The catalysed reaction is L-lysyl-[protein] + 3 S-adenosyl-L-methionine = N(6),N(6),N(6)-trimethyl-L-lysyl-[protein] + 3 S-adenosyl-L-homocysteine + 3 H(+). In terms of biological role, methylates ribosomal protein L11. The protein is Ribosomal protein L11 methyltransferase of Porphyromonas gingivalis (strain ATCC BAA-308 / W83).